Here is a 98-residue protein sequence, read N- to C-terminus: NADH-ubiquinone oxidoreductase chain 4L (98 aa).

The next 3 helical transmembrane spans lie at 2-22 (PSISTNIILAFITALLGMLIF), 29-49 (SLLCLEGMMLSMFILSTLTIL), and 61-81 (ILLLVFAACEAAVGLALLVTV).

The protein belongs to the complex I subunit 4L family. Core subunit of respiratory chain NADH dehydrogenase (Complex I) which is composed of 45 different subunits.

It localises to the mitochondrion inner membrane. It carries out the reaction a ubiquinone + NADH + 5 H(+)(in) = a ubiquinol + NAD(+) + 4 H(+)(out). Core subunit of the mitochondrial membrane respiratory chain NADH dehydrogenase (Complex I) which catalyzes electron transfer from NADH through the respiratory chain, using ubiquinone as an electron acceptor. Part of the enzyme membrane arm which is embedded in the lipid bilayer and involved in proton translocation. The polypeptide is NADH-ubiquinone oxidoreductase chain 4L (MT-ND4L) (Eulemur coronatus (Crowned lemur)).